The primary structure comprises 323 residues: Methenyltetrahydromethanopterin cyclohydrolase (323 aa).

This sequence belongs to the MCH family.

The protein resides in the cytoplasm. The enzyme catalyses 5,10-methenyl-5,6,7,8-tetrahydromethanopterin + H2O = N(5)-formyl-5,6,7,8-tetrahydromethanopterin + H(+). It participates in one-carbon metabolism; methanogenesis from CO(2); 5,10-methenyl-5,6,7,8-tetrahydromethanopterin from CO(2): step 3/3. Its function is as follows. Catalyzes the reversible interconversion of 5-formyl-H(4)MPT to methenyl-H(4)MPT(+). This Methanococcus maripaludis (strain C5 / ATCC BAA-1333) protein is Methenyltetrahydromethanopterin cyclohydrolase.